The chain runs to 90 residues: U7-theraphotoxin-Hhn1a 1 (90 aa).

The N-terminal stretch at 1–19 (MKTAIFTVVLALAVFAVLS) is a signal peptide. Residues 20–50 (FGWEANEKALSEEFTELIHEKEAASETEARE) constitute a propeptide that is removed on maturation. Disulfide bonds link Cys-51–Cys-65, Cys-58–Cys-70, and Cys-64–Cys-81.

This sequence belongs to the neurotoxin 10 (Hwtx-1) family. 13 (Hntx-13) subfamily. In terms of tissue distribution, expressed by the venom gland.

The protein resides in the secreted. Functionally, ion channel inhibitor. This is U7-theraphotoxin-Hhn1a 1 from Cyriopagopus hainanus (Chinese bird spider).